The sequence spans 392 residues: Acyl-CoA dehydrogenase IpdE1 (392 aa).

FAD contacts are provided by residues 126 to 129 (QGYS) and Ser171. Glu254 serves as the catalytic Proton acceptor. Residue 371-373 (SNE) coordinates FAD.

This sequence belongs to the acyl-CoA dehydrogenase family. As to quaternary structure, heterotetramer composed of 2 IpdE1 subunits and 2 IpdE2 subunits. Requires FAD as cofactor.

It carries out the reaction 3-[(3aS,4S,5R,7aS)-5-hydroxy-7a-methyl-1-oxo-octahydro-1H-inden-4-yl]propanoyl-CoA + A = (2E)-3-[(3aS,4S,5R,7aS)-5-hydroxy-7a-methyl-1-oxo-octahydro-1H-inden-4-yl]prop-2-enoyl-CoA + AH2. The protein operates within steroid metabolism; cholesterol degradation. Functionally, involved in cholesterol degradation. Catalyzes the dehydrogenation of 5OH-HIP-CoA to 5OH-HIPE-CoA. The protein is Acyl-CoA dehydrogenase IpdE1 of Mycolicibacterium smegmatis (strain ATCC 700084 / mc(2)155) (Mycobacterium smegmatis).